The following is a 148-amino-acid chain: SsrA-binding protein (148 aa).

The tract at residues 128–148 (ESIAKKDQERNLKREFKNNNR) is disordered.

It belongs to the SmpB family.

The protein localises to the cytoplasm. In terms of biological role, required for rescue of stalled ribosomes mediated by trans-translation. Binds to transfer-messenger RNA (tmRNA), required for stable association of tmRNA with ribosomes. tmRNA and SmpB together mimic tRNA shape, replacing the anticodon stem-loop with SmpB. tmRNA is encoded by the ssrA gene; the 2 termini fold to resemble tRNA(Ala) and it encodes a 'tag peptide', a short internal open reading frame. During trans-translation Ala-aminoacylated tmRNA acts like a tRNA, entering the A-site of stalled ribosomes, displacing the stalled mRNA. The ribosome then switches to translate the ORF on the tmRNA; the nascent peptide is terminated with the 'tag peptide' encoded by the tmRNA and targeted for degradation. The ribosome is freed to recommence translation, which seems to be the essential function of trans-translation. The chain is SsrA-binding protein from Fusobacterium nucleatum subsp. nucleatum (strain ATCC 25586 / DSM 15643 / BCRC 10681 / CIP 101130 / JCM 8532 / KCTC 2640 / LMG 13131 / VPI 4355).